Reading from the N-terminus, the 210-residue chain is T-cell surface glycoprotein CD8 beta chain (210 aa).

An N-terminal signal peptide occupies residues 1-21 (MRPRLWLLLAAQLAVLHGSSV). One can recognise an Ig-like V-type domain in the interval 22–132 (LQQTPAYIKV…ELTFGKGTQL (111 aa)). Over 22–170 (LQQTPAYIKV…ETQKGPLCSP (149 aa)) the chain is Extracellular. Cysteines 41 and 116 form a disulfide. The N-linked (GlcNAc...) asparagine glycan is linked to Asn-102. The helical transmembrane segment at 171–191 (ITLGLLVAGVLVLLVSLGVAI) threads the bilayer. The Cytoplasmic segment spans residues 192 to 210 (HLCCRRRRARLRFMKQFYK).

Forms disulfide-linked heterodimers with CD8A at the cell surface. Interacts with CD3D; this interaction couples TCR-CD3 with CD8. Interacts with LCK. Post-translationally, phosphorylated as a consequence of T-cell activation. Palmitoylated at the cytoplasmic tail and thereby targets the heterodimer CD8A/CD8B to lipid rafts unlike CD8A homodimers.

The protein localises to the cell membrane. Functionally, integral membrane glycoprotein that plays an essential role in the immune response and serves multiple functions in responses against both external and internal offenses. In T-cells, functions primarily as a coreceptor for MHC class I molecule:peptide complex. The antigens presented by class I peptides are derived from cytosolic proteins while class II derived from extracellular proteins. Interacts simultaneously with the T-cell receptor (TCR) and the MHC class I proteins presented by antigen presenting cells (APCs). In turn, recruits the Src kinase LCK to the vicinity of the TCR-CD3 complex. A palmitoylation site in the cytoplasmic tail of CD8B chain contributes to partitioning of CD8 into the plasma membrane lipid rafts where signaling proteins are enriched. Once LCK recruited, it initiates different intracellular signaling pathways by phosphorylating various substrates ultimately leading to lymphokine production, motility, adhesion and activation of cytotoxic T-lymphocytes (CTLs). Additionally, plays a critical role in thymic selection of CD8+ T-cells. The protein is T-cell surface glycoprotein CD8 beta chain (CD8B) of Pongo pygmaeus (Bornean orangutan).